A 204-amino-acid chain; its full sequence is MSTPIALVPARTAEVTRNTAETRITVKVNLDGSGQSHLSTGIGFFDHMLDQIARHGLIDLDIQATGDLHIDGHHTVEDVGITLGQAVHQAVGDKKGIRRYGHAYVPLDEALSRVVIDFSGRPGLVMDVPFKSGMIGTFDAQLAHEFFQGFVNHAFVTLHIDNLKGENAHHQAETVFKAFARALRAALEFDPRALGQIPSTKGTL.

Belongs to the imidazoleglycerol-phosphate dehydratase family.

It is found in the cytoplasm. It catalyses the reaction D-erythro-1-(imidazol-4-yl)glycerol 3-phosphate = 3-(imidazol-4-yl)-2-oxopropyl phosphate + H2O. Its pathway is amino-acid biosynthesis; L-histidine biosynthesis; L-histidine from 5-phospho-alpha-D-ribose 1-diphosphate: step 6/9. The chain is Imidazoleglycerol-phosphate dehydratase from Albidiferax ferrireducens (strain ATCC BAA-621 / DSM 15236 / T118) (Rhodoferax ferrireducens).